A 771-amino-acid chain; its full sequence is Phosphoglycerate kinase (771 aa).

The tract at residues 1-406 is phosphoglycerate kinase; the sequence is MKKLITDLNL…PGIDAIQNYE (406 aa). Residues 20–22, Arg-35, 58–61, Arg-118, and Arg-155 each bind substrate; these read DLN and HLGR. Residues Lys-206, Gly-295, Glu-334, and 361 to 364 each bind ATP; that span reads GGDS. The tract at residues 407–771 is unknown; that stretch reads QTYEQYDSQV…KRFWFFGRKR (365 aa).

In the N-terminal section; belongs to the phosphoglycerate kinase family. Monomer.

The protein localises to the cytoplasm. It carries out the reaction (2R)-3-phosphoglycerate + ATP = (2R)-3-phospho-glyceroyl phosphate + ADP. It participates in carbohydrate degradation; glycolysis; pyruvate from D-glyceraldehyde 3-phosphate: step 2/5. This chain is Phosphoglycerate kinase (pgk), found in Mycoplasmopsis pulmonis (strain UAB CTIP) (Mycoplasma pulmonis).